We begin with the raw amino-acid sequence, 101 residues long: DNA-directed RNA polymerase subunit beta (101 aa).

Residues 74 to 101 (KRRLSALGPGGLSRERAGLEVRDVHSSH) are disordered. The segment covering 86–101 (SRERAGLEVRDVHSSH) has biased composition (basic and acidic residues).

The protein belongs to the RNA polymerase beta chain family. In terms of assembly, the RNAP catalytic core consists of 2 alpha, 1 beta, 1 beta' and 1 omega subunit. When a sigma factor is associated with the core the holoenzyme is formed, which can initiate transcription.

It carries out the reaction RNA(n) + a ribonucleoside 5'-triphosphate = RNA(n+1) + diphosphate. Functionally, DNA-dependent RNA polymerase catalyzes the transcription of DNA into RNA using the four ribonucleoside triphosphates as substrates. This is DNA-directed RNA polymerase subunit beta (rpoB) from Mycolicibacterium peregrinum (Mycobacterium peregrinum).